Reading from the N-terminus, the 285-residue chain is Bifunctional protein FolD (285 aa).

NADP(+) is bound by residues 165 to 167 (GRS) and S190.

This sequence belongs to the tetrahydrofolate dehydrogenase/cyclohydrolase family. Homodimer.

The catalysed reaction is (6R)-5,10-methylene-5,6,7,8-tetrahydrofolate + NADP(+) = (6R)-5,10-methenyltetrahydrofolate + NADPH. It carries out the reaction (6R)-5,10-methenyltetrahydrofolate + H2O = (6R)-10-formyltetrahydrofolate + H(+). It participates in one-carbon metabolism; tetrahydrofolate interconversion. In terms of biological role, catalyzes the oxidation of 5,10-methylenetetrahydrofolate to 5,10-methenyltetrahydrofolate and then the hydrolysis of 5,10-methenyltetrahydrofolate to 10-formyltetrahydrofolate. The polypeptide is Bifunctional protein FolD (Burkholderia thailandensis (strain ATCC 700388 / DSM 13276 / CCUG 48851 / CIP 106301 / E264)).